Here is a 145-residue protein sequence, read N- to C-terminus: Large ribosomal subunit protein uL16 (145 aa).

The protein belongs to the universal ribosomal protein uL16 family. Part of the 50S ribosomal subunit.

Functionally, binds 23S rRNA and is also seen to make contacts with the A and possibly P site tRNAs. The sequence is that of Large ribosomal subunit protein uL16 from Lactobacillus gasseri (strain ATCC 33323 / DSM 20243 / BCRC 14619 / CIP 102991 / JCM 1131 / KCTC 3163 / NCIMB 11718 / NCTC 13722 / AM63).